The chain runs to 453 residues: Cytochrome b-c1 complex subunit 2, mitochondrial (453 aa).

The transit peptide at 1 to 14 (MKLLTRAGSFSRFY) directs the protein to the mitochondrion. An N6-acetyllysine mark is found at Lys66, Lys199, and Lys250.

Belongs to the peptidase M16 family. UQCRC2/QCR2 subfamily. As to quaternary structure, component of the ubiquinol-cytochrome c oxidoreductase (cytochrome b-c1 complex, complex III, CIII), a multisubunit enzyme composed of 11 subunits. The complex is composed of 3 respiratory subunits cytochrome b, cytochrome c1 and Rieske protein UQCRFS1, 2 core protein subunits UQCRC1/QCR1 and UQCRC2/QCR2, and 6 low-molecular weight protein subunits UQCRH/QCR6, UQCRB/QCR7, UQCRQ/QCR8, UQCR10/QCR9, UQCR11/QCR10 and subunit 9, the cleavage product of Rieske protein UQCRFS1. The complex exists as an obligatory dimer and forms supercomplexes (SCs) in the inner mitochondrial membrane with NADH-ubiquinone oxidoreductase (complex I, CI) and cytochrome c oxidase (complex IV, CIV), resulting in different assemblies (supercomplex SCI(1)III(2)IV(1) and megacomplex MCI(2)III(2)IV(2)). Interacts with RAB5IF. Interacts with STMP1.

It localises to the mitochondrion inner membrane. Its function is as follows. Component of the ubiquinol-cytochrome c oxidoreductase, a multisubunit transmembrane complex that is part of the mitochondrial electron transport chain which drives oxidative phosphorylation. The respiratory chain contains 3 multisubunit complexes succinate dehydrogenase (complex II, CII), ubiquinol-cytochrome c oxidoreductase (cytochrome b-c1 complex, complex III, CIII) and cytochrome c oxidase (complex IV, CIV), that cooperate to transfer electrons derived from NADH and succinate to molecular oxygen, creating an electrochemical gradient over the inner membrane that drives transmembrane transport and the ATP synthase. The cytochrome b-c1 complex catalyzes electron transfer from ubiquinol to cytochrome c, linking this redox reaction to translocation of protons across the mitochondrial inner membrane, with protons being carried across the membrane as hydrogens on the quinol. In the process called Q cycle, 2 protons are consumed from the matrix, 4 protons are released into the intermembrane space and 2 electrons are passed to cytochrome c. The 2 core subunits UQCRC1/QCR1 and UQCRC2/QCR2 are homologous to the 2 mitochondrial-processing peptidase (MPP) subunits beta-MPP and alpha-MPP respectively, and they seem to have preserved their MPP processing properties. May be involved in the in situ processing of UQCRFS1 into the mature Rieske protein and its mitochondrial targeting sequence (MTS)/subunit 9 when incorporated into complex III. This is Cytochrome b-c1 complex subunit 2, mitochondrial (UQCRC2) from Homo sapiens (Human).